A 620-amino-acid polypeptide reads, in one-letter code: Nuclear cap-binding protein subunit 3 (620 aa).

Residue Lys-12 forms a Glycyl lysine isopeptide (Lys-Gly) (interchain with G-Cter in SUMO2) linkage. Residues 15–28 (APAGPALGLPSPEA) are compositionally biased toward low complexity. Residues 15 to 42 (APAGPALGLPSPEAESGVDRGEPEPMEV) form a disordered region. Ser-25 is subject to Phosphoserine. Lys-70 participates in a covalent cross-link: Glycyl lysine isopeptide (Lys-Gly) (interchain with G-Cter in SUMO2). The residue at position 73 (Ser-73) is a Phosphoserine. The tract at residues 126–187 (ETIYICGVDE…MSSLPAQDKI (62 aa)) is RNA recognition motif (RRM) domain. A WLDD motif; essential for 7-methylguanosine-containing mRNA cap binding motif is present at residues 155-158 (WLDD). The segment covering 185–198 (DKIRSRDASEDKSA) has biased composition (basic and acidic residues). Disordered stretches follow at residues 185 to 233 (DKIR…LDTL), 332 to 419 (HSGL…PKKS), and 436 to 620 (IRNS…EAES). Residue Lys-186 forms a Glycyl lysine isopeptide (Lys-Gly) (interchain with G-Cter in SUMO2) linkage. Phosphoserine is present on residues Ser-209 and Ser-210. Composition is skewed to acidic residues over residues 209–230 (SSDDDEAEEGEVEDENSSDVEL) and 341–365 (EPIEEEEEEEEEEEEEEEEDQDMDA). The span at 366 to 388 (DDRVVVEYHEELPALKQPRERSA) shows a compositional bias: basic and acidic residues. At Thr-413 the chain carries Phosphothreonine. Residue Ser-415 is modified to Phosphoserine. Basic and acidic residues-rich tracts occupy residues 459-474 (PPEKFADVRHLLDEKR) and 511-521 (VRREPSSDVHS). Lys-541 participates in a covalent cross-link: Glycyl lysine isopeptide (Lys-Gly) (interchain with G-Cter in SUMO2). 2 stretches are compositionally biased toward basic and acidic residues: residues 554 to 569 (KTKEKNTKKVDHRAPG) and 585 to 598 (IKEKEQSRQKKSRL). Residues 611 to 620 (ESSSGSEAES) are compositionally biased toward low complexity. Ser-620 is modified (phosphoserine).

This sequence belongs to the NCBP3 family. As to quaternary structure, component of an alternative cap-binding complex (CBC) composed of NCBP1/CBP80 and NCBP3. Interacts with SRRT, KPNA3, THOC5 and EIF4A3.

It is found in the nucleus. The protein resides in the cytoplasm. In terms of biological role, associates with NCBP1/CBP80 to form an alternative cap-binding complex (CBC) which plays a key role in mRNA export. NCBP3 serves as adapter protein linking the capped RNAs (m7GpppG-capped RNA) to NCBP1/CBP80. Unlike the conventional CBC with NCBP2 which binds both small nuclear RNA (snRNA) and messenger (mRNA) and is involved in their export from the nucleus, the alternative CBC with NCBP3 does not bind snRNA and associates only with mRNA thereby playing a role in only mRNA export. The alternative CBC is particularly important in cellular stress situations such as virus infections and the NCBP3 activity is critical to inhibit virus growth. The sequence is that of Nuclear cap-binding protein subunit 3 from Homo sapiens (Human).